Consider the following 885-residue polypeptide: Eukaryotic translation initiation factor 3 subunit C (885 aa).

The segment at 1 to 81 is disordered; the sequence is MSFFAKLQGS…SDSDDERQAV (81 aa). A compositionally biased stretch (low complexity) spans 9–28; that stretch reads GSDSESSSGSESEESILSGS. Residues 55–76 are compositionally biased toward acidic residues; sequence EESESEEESSDEDEEEMSDSDD. Positions 624 to 797 constitute a PCI domain; it reads FHMHLNVELL…GVVIFHRVEQ (174 aa). The disordered stretch occupies residues 822-885; the sequence is LDVKLGNQGQ…TTMGRRVTAQ (64 aa). Gly residues predominate over residues 855-872; that stretch reads RGTYRGRGGRGGRGGFNQ.

The protein belongs to the eIF-3 subunit C family. In terms of assembly, component of the eukaryotic translation initiation factor 3 (eIF-3) complex.

The protein localises to the cytoplasm. Its function is as follows. Component of the eukaryotic translation initiation factor 3 (eIF-3) complex, which is involved in protein synthesis of a specialized repertoire of mRNAs and, together with other initiation factors, stimulates binding of mRNA and methionyl-tRNAi to the 40S ribosome. The eIF-3 complex specifically targets and initiates translation of a subset of mRNAs involved in cell proliferation. The sequence is that of Eukaryotic translation initiation factor 3 subunit C from Cryptococcus neoformans var. neoformans serotype D (strain B-3501A) (Filobasidiella neoformans).